Reading from the N-terminus, the 511-residue chain is Sphingosine-1-phosphate transporter MFSD2B (511 aa).

The next 9 helical transmembrane spans lie at 108–128 (MPWM…LWFV), 136–156 (VLWY…YHVP), 236–256 (IAAG…FLGV), 280–300 (TMQF…SAAV), 323–343 (NLVL…QWFL), 357–377 (LMIP…AYVV), 379–399 (VASG…LPDV), 415–435 (AIFY…ALGI), and 462–482 (LLIG…LAFY).

This sequence belongs to the major facilitator superfamily.

It localises to the cell membrane. The catalysed reaction is sphing-4-enine 1-phosphate(in) = sphing-4-enine 1-phosphate(out). It carries out the reaction sphinganine 1-phosphate(in) = sphinganine 1-phosphate(out). It catalyses the reaction sphinga-4E,14Z-dienine-1-phosphate(in) = sphinga-4E,14Z-dienine-1-phosphate(out). Its function is as follows. Lipid transporter that specifically mediates export of sphingosine-1-phosphate in red blood cells and platelets. Sphingosine-1-phosphate is a signaling sphingolipid and its export from red blood cells into in the plasma is required for red blood cell morphology. Sphingosine-1-phosphate export from platelets is required for platelet aggregation and thrombus formation. In addition to export, also able to mediate S1P import. The sequence is that of Sphingosine-1-phosphate transporter MFSD2B from Xenopus tropicalis (Western clawed frog).